Here is a 252-residue protein sequence, read N- to C-terminus: Tumor necrosis factor ligand superfamily member 15 (252 aa).

The Cytoplasmic portion of the chain corresponds to 1-39 (MAEELGLGFGEAVPVEMLPEGCRHRREARTGLAARSKAC). The helical; Signal-anchor for type II membrane protein transmembrane segment at 40–60 (LALTCCLLSFPILAGLSTLLM) threads the bilayer. Topologically, residues 61–252 (TGQLRIPGKD…DKTFFGAFLI (192 aa)) are extracellular. The THD domain maps to 96–252 (PKAHLTIMRQ…DKTFFGAFLI (157 aa)). The N-linked (GlcNAc...) asparagine glycan is linked to Asn-134. An intrachain disulfide couples Cys-163 to Cys-203. Asn-230 is a glycosylation site (N-linked (GlcNAc...) asparagine).

Belongs to the tumor necrosis factor family. In terms of assembly, homotrimer.

The protein resides in the membrane. Receptor for TNFRSF25 and TNFRSF6B. Mediates activation of NF-kappa-B. Inhibits vascular endothelial growth and angiogenesis (in vitro). Promotes activation of caspases and apoptosis. Promotes splenocyte alloactivation. The sequence is that of Tumor necrosis factor ligand superfamily member 15 (Tnfsf15) from Rattus norvegicus (Rat).